Here is a 418-residue protein sequence, read N- to C-terminus: MSGLDIYPHDPSSSSSTSSIDLSNEAFFSTGGLFLEPPGVSSSFFDSISSKCSDSEPLHFPGYWRNKTRLRSGKNFMFLSVSLSKDRSEQQCKKALAQNDEIPGKDNRKRSVIGGVRRRGTMNTRKHLWAGAVAAMVSKTFLAPLERLKLEYTVRGEQRNLLVVAKSIATTQGLTGFWKGNLLNVLRTAPFKAVNFCAYDTYRKQLLKIAGNQEATNFERFVAGAAAGITATVLCLPLDTIRTKLVARGGEALGGIGGAFRYMIQTEGLFSLYKGLVPSIASMALSGAVFYGVYDILKSSFLHTPEGRKRLIDMKQQGQELNALDRLELGPIRTLMYGAIAGACTEVATYPFEVVRRQLQMQMGKNKLNALAMGFNIIERGGIPALYAGLLPSLLQVLPSASISYFVYECMKIVLKVE.

Solcar repeat units follow at residues 122 to 205 (MNTR…YRKQ), 215 to 300 (ATNF…LKSS), and 329 to 414 (LGPI…MKIV). 6 consecutive transmembrane segments (helical) span residues 127–147 (HLWA…PLER), 180–200 (GNLL…CAYD), 221–241 (FVAG…LDTI), 276–296 (LVPS…VYDI), 335–355 (LMYG…FEVV), and 383–403 (IPAL…SASI).

Belongs to the mitochondrial carrier (TC 2.A.29) family.

It localises to the mitochondrion inner membrane. In terms of biological role, probable mitochondrial adenylate carrier that catalyzes the transport of ATP, ADP and AMP. This Arabidopsis thaliana (Mouse-ear cress) protein is Probable mitochondrial adenine nucleotide transporter BTL2.